We begin with the raw amino-acid sequence, 693 residues long: Tegument protein UL47 (693 aa).

2 disordered regions span residues 1–32 (MSAREPAGRRRRASTRPRASPVADEPAGDGVG) and 48–126 (ELEA…GYLG). Residues 48 to 57 (ELEALEEMAG) show a composition bias toward acidic residues. The interval 50–75 (EALEEMAGDEPPVRRRREGPRARRRR) is RNA-binding. The short motif at 63–75 (RRRREGPRARRRR) is the Nuclear localization signal element. The span at 63–75 (RRRREGPRARRRR) shows a compositional bias: basic residues. The Nuclear export signal signature appears at 647–670 (SVLGPGVRVVDIMSQFRKLLMGDE).

The protein belongs to the alphaherpesvirinae HHV-1 UL47 family. Interacts with US3 kinase. Interacts with UL31 and UL34; these interactions seem important for efficient virion nuclear egress. Interacts with UL41/VHS. Phosphorylated by US3. This phosphorylation is required for proper nuclear localization.

The protein resides in the virion tegument. It localises to the host nucleus. Its subcellular location is the host cytoplasm. In terms of biological role, tegument protein that can bind to various RNA transcripts. Plays a role in the attenuation of selective viral and cellular mRNA degradation by modulating the activity of host shutoff RNase UL41/VHS. Also plays a role in the primary envelopment of virions in the perinuclear space, probably by interacting with two nuclear egress proteins UL31 and UL34. The chain is Tegument protein UL47 from Human herpesvirus 1 (strain F) (HHV-1).